We begin with the raw amino-acid sequence, 439 residues long: Serine hydroxymethyltransferase (439 aa).

Residue 126 to 128 participates in (6S)-5,6,7,8-tetrahydrofolate binding; sequence AHV. Lysine 232 is subject to N6-(pyridoxal phosphate)lysine.

This sequence belongs to the SHMT family. As to quaternary structure, homodimer. The cofactor is pyridoxal 5'-phosphate.

The protein localises to the cytoplasm. Its pathway is amino-acid biosynthesis; glycine biosynthesis; glycine from L-serine: step 1/1. Catalyzes the reversible interconversion of serine and glycine with a modified folate serving as the one-carbon carrier. Also exhibits a pteridine-independent aldolase activity toward beta-hydroxyamino acids, producing glycine and aldehydes, via a retro-aldol mechanism. In Staphylothermus marinus (strain ATCC 43588 / DSM 3639 / JCM 9404 / F1), this protein is Serine hydroxymethyltransferase.